The sequence spans 135 residues: Lactoylglutathione lyase (135 aa).

The VOC domain maps to 2–126 (RLLHTMLRVG…DGYKIELIEE (125 aa)). His-5 lines the Ni(2+) pocket. Residue Arg-9 coordinates substrate. Position 56 (Glu-56) interacts with Ni(2+). Positions 60 and 74 each coordinate substrate. 2 residues coordinate Ni(2+): His-74 and Glu-122. The active-site Proton donor/acceptor is Glu-122.

The protein belongs to the glyoxalase I family. In terms of assembly, homodimer. Requires Ni(2+) as cofactor.

The enzyme catalyses (R)-S-lactoylglutathione = methylglyoxal + glutathione. It participates in secondary metabolite metabolism; methylglyoxal degradation; (R)-lactate from methylglyoxal: step 1/2. Its function is as follows. Catalyzes the conversion of hemimercaptal, formed from methylglyoxal and glutathione, to S-lactoylglutathione. The polypeptide is Lactoylglutathione lyase (gloA) (Escherichia coli O157:H7).